The following is a 266-amino-acid chain: MGLLSVDLLITLQILPVFFSNCLFLALYDSVILLKHVALLLSRSKSTRGEWRRMLTSEGLRCVWNSFLLDAYKQVKLGEDAPNSSVVHVSNPEAGNNCASEKTADGAECHLLDFASAERPLVVNFGSATUPPFTRQLPAFRQLVEEFSSVADFLLVYIDEAHPSDGWAVPGDSSMSFEVKKHRNQEDRCAAAHQLLERFSLPPQCQVVADRMDNNANVAYGVAFERVCIVQRRKIAYLGGKGPFSYNLQEVRSWLEKNFSKRUILD.

The Lumenal portion of the chain corresponds to 1–9; that stretch reads MGLLSVDLL. The chain crosses the membrane as a helical; Signal-anchor for type III membrane protein span at residues 10–34; that stretch reads ITLQILPVFFSNCLFLALYDSVILL. The Cytoplasmic portion of the chain corresponds to 35–266; sequence KHVALLLSRS…KNFSKRUILD (232 aa). U130 is an active-site residue. Residues U130 and U263 are each a non-standard amino acid (selenocysteine).

This sequence belongs to the iodothyronine deiodinase family. In terms of assembly, predominantly monomer. Can form homodimers but homodimerization is not essential for enzyme activity. Interacts with USP20 and USP33. Interacts with MARCHF6. Post-translationally, ubiquitinated by MARCHF6, leading to its degradation by the proteasome. Deubiquitinated by USP20 and USP33. As to expression, expressed in cerebral cortex, cerebellum, pituitary gland, mostly in anterior pituitary gland, and pineal gland, as well as in brown adipose tissue (BAT).

The protein resides in the endoplasmic reticulum membrane. It carries out the reaction 3,3',5-triiodo-L-thyronine + iodide + A + H(+) = L-thyroxine + AH2. The catalysed reaction is 3,3'-diiodo-L-thyronine + iodide + A + H(+) = 3,3',5'-triiodo-L-thyronine + AH2. It catalyses the reaction 3'-iodo-L-thyronine + iodide + A + H(+) = 3',5'-diiodo-L-thyronine + AH2. The enzyme catalyses 3,3'-diiodothyronamine + iodide + A + H(+) = 3,3',5'-triiodothyronamine + AH2. It carries out the reaction 3'-iodothyronamine + iodide + A + H(+) = 3',5'-diiodothyronamine + AH2. In terms of biological role, plays a crucial role in the metabolism of thyroid hormones (TH) and has specific roles in TH activation and inactivation by deiodination. Catalyzes the deiodination of L-thyroxine (T4) to 3,5,3'-triiodothyronine (T3) and 3',5'-diiodothyronine (3',5'-T2) to 3'-monoiodothyronine (3'-T1) via outer-ring deiodination (ORD). Catalyzes the deiodination of 3,3',5'-triiodothyronine (rT3) to 3,3'-diiodothyronine (3,3'-T2) via ORD. Catalyzes the phenolic ring deiodinations of 3,3',5'-triiodothyronamine and 3',5'- diiodothyronamine. This chain is Type II iodothyronine deiodinase (Dio2), found in Rattus norvegicus (Rat).